Reading from the N-terminus, the 121-residue chain is Ribosome-binding factor A (121 aa).

It belongs to the RbfA family. As to quaternary structure, monomer. Binds 30S ribosomal subunits, but not 50S ribosomal subunits or 70S ribosomes.

It is found in the cytoplasm. Its function is as follows. One of several proteins that assist in the late maturation steps of the functional core of the 30S ribosomal subunit. Associates with free 30S ribosomal subunits (but not with 30S subunits that are part of 70S ribosomes or polysomes). Required for efficient processing of 16S rRNA. May interact with the 5'-terminal helix region of 16S rRNA. This is Ribosome-binding factor A from Clostridium tetani (strain Massachusetts / E88).